A 600-amino-acid polypeptide reads, in one-letter code: Integrator complex subunit 11 (600 aa).

Residues histidine 68, histidine 70, aspartate 72, histidine 73, histidine 157, and aspartate 178 each coordinate Zn(2+). Positions 68-73 (HFHLDH) match the HXHXDH motif motif. Glutamate 203 is an active-site residue. Lysine 381 is covalently cross-linked (Glycyl lysine isopeptide (Lys-Gly) (interchain with G-Cter in SUMO)). Histidine 414 contacts Zn(2+). Glycyl lysine isopeptide (Lys-Gly) (interchain with G-Cter in SUMO) cross-links involve residues lysine 462 and lysine 475. Residues 469 to 479 (LLPEAKKPRLL) carry the Nuclear localization signal motif.

This sequence belongs to the metallo-beta-lactamase superfamily. RNA-metabolizing metallo-beta-lactamase-like family. INTS11 subfamily. Component of the Integrator complex, composed of core subunits INTS1, INTS2, INTS3, INTS4, INTS5, INTS6, INTS7, INTS8, INTS9/RC74, INTS10, INTS11/CPSF3L, INTS12, INTS13, INTS14 and INTS15. The core complex associates with protein phosphatase 2A subunits PPP2CA and PPP2R1A, to form the Integrator-PP2A (INTAC) complex. INTS11 is part of the RNA endonuclease subcomplex, composed of INTS4, INTS9, INTS11 and inositol hexakisphosphate (InsP6). Interacts with WDR73; interaction is required for the assembly of the RNA endonuclease subcomplex in the cytoplasm. Interacts with BRAT1; interaction is required for the assembly of the RNA endonuclease subcomplex and inhibits the endonuclease activity of INTS11 before formation of mature integrator complex. Zn(2+) is required as a cofactor. Post-translationally, sumoylated; sumoylation regulates its subcellular location and is required for integrator complex integrity.

Its subcellular location is the nucleus. The protein localises to the cytoplasm. With respect to regulation, the RNA endonuclease activity is inhibited by BRAT1 that forms hyrogen bond and hydrophobic interactions with the active site. Its function is as follows. RNA endonuclease component of the integrator complex, a multiprotein complex that terminates RNA polymerase II (Pol II) transcription in the promoter-proximal region of genes. The integrator complex provides a quality checkpoint during transcription elongation by driving premature transcription termination of transcripts that are unfavorably configured for transcriptional elongation: the complex terminates transcription by (1) catalyzing dephosphorylation of the C-terminal domain (CTD) of Pol II subunit POLR2A/RPB1 and SUPT5H/SPT5, (2) degrading the exiting nascent RNA transcript via endonuclease activity and (3) promoting the release of Pol II from bound DNA. The integrator complex is also involved in terminating the synthesis of non-coding Pol II transcripts, such as enhancer RNAs (eRNAs), small nuclear RNAs (snRNAs), telomerase RNAs and long non-coding RNAs (lncRNAs). Within the integrator complex, INTS11 constitutes the RNA endonuclease subunit that degrades exiting nascent RNA transcripts. Mediates recruitment of cytoplasmic dynein to the nuclear envelope, probably as component of the integrator complex. The sequence is that of Integrator complex subunit 11 from Mus musculus (Mouse).